We begin with the raw amino-acid sequence, 738 residues long: Melanotransferrin (738 aa).

An N-terminal signal peptide occupies residues 1–19; it reads MRLLSVTFWLLLSLRTVVC. 2 Transferrin-like domains span residues 23–357 and 366–706; these read VQWC…GLLC and LRWC…GMLS. 2 disulfide bridges follow: C26/C63 and C36/C54. Residues D78 and Y107 each contribute to the Fe(3+) site. N118 carries an N-linked (GlcNAc...) asparagine glycan. 4 disulfides stabilise this stretch: C130–C216, C172–C189, C186–C199, and C257–C271. T132 is a hydrogencarbonate binding site. An N-linked (GlcNAc...) asparagine glycan is attached at N135. Hydrogencarbonate-binding residues include R136, V138, and G139. Y210 provides a ligand contact to Fe(3+). The Fe(3+) site is built by H279 and Y451. S462 carries the post-translational modification Phosphoserine. N-linked (GlcNAc...) asparagine glycosylation occurs at N515. Fe(3+) contacts are provided by Y556 and H625. C709 carries the GPI-anchor amidated cysteine lipid modification. Residues 710-738 constitute a propeptide, removed in mature form; the sequence is SGAGAAVQRVPLLALLLLTLAAGLLPRVL.

This sequence belongs to the transferrin family.

It localises to the cell membrane. In terms of biological role, involved in iron cellular uptake. Seems to be internalized and then recycled back to the cell membrane. Binds a single atom of iron per subunit. Could also bind zinc. This Mus musculus (Mouse) protein is Melanotransferrin (Meltf).